Reading from the N-terminus, the 1107-residue chain is Protein translocase subunit SecA (1107 aa).

Residues Q169, 187–191 (GEGKT), and D688 contribute to the ATP site. Basic and acidic residues predominate over residues 1036 to 1066 (RHAAEQRTDMSKYRTQKDDIEAQQKAQRDAA). The disordered stretch occupies residues 1036 to 1107 (RHAAEQRTDM…KFKQCHGRNL (72 aa)). Zn(2+) is bound by residues C1091, C1093, C1102, and H1103. Positions 1097 to 1107 (KKFKQCHGRNL) are enriched in basic residues.

It belongs to the SecA family. Monomer and homodimer. Part of the essential Sec protein translocation apparatus which comprises SecA, SecYEG and auxiliary proteins SecDF. Other proteins may also be involved. Zn(2+) serves as cofactor.

The protein localises to the cell inner membrane. It localises to the cytoplasm. The enzyme catalyses ATP + H2O + cellular proteinSide 1 = ADP + phosphate + cellular proteinSide 2.. In terms of biological role, part of the Sec protein translocase complex. Interacts with the SecYEG preprotein conducting channel. Has a central role in coupling the hydrolysis of ATP to the transfer of proteins into and across the cell membrane, serving as an ATP-driven molecular motor driving the stepwise translocation of polypeptide chains across the membrane. This chain is Protein translocase subunit SecA, found in Porphyromonas gingivalis (strain ATCC BAA-308 / W83).